Here is a 3343-residue protein sequence, read N- to C-terminus: Cadherin-3 (3343 aa).

An N-terminal signal peptide occupies residues 1-26; the sequence is MTIRIFFSIFLLNHLIFFHLFNFTHQ. Asparagine 22 carries N-linked (GlcNAc...) asparagine glycosylation. Over 27–3228 the chain is Extracellular; that stretch reads FSEETIKFSV…LFSNFSNTTT (3202 aa). 3 Cadherin domains span residues 28–117, 118–229, and 242–330; these read SEET…SPIF, PIDV…PPNF, and PNTK…EPNI. N-linked (GlcNAc...) asparagine glycosylation is found at asparagine 149, asparagine 250, asparagine 288, asparagine 369, asparagine 467, and asparagine 612. Residues 632–738 form the Cadherin 4 domain; that stretch reads ICQITEIHVL…EDVNDNVPKF (107 aa). Residues asparagine 752, asparagine 806, asparagine 941, asparagine 966, asparagine 970, asparagine 985, asparagine 1042, asparagine 1335, asparagine 1425, asparagine 1429, asparagine 1557, asparagine 1563, asparagine 1597, asparagine 1624, asparagine 1695, and asparagine 1702 are each glycosylated (N-linked (GlcNAc...) asparagine). One can recognise a Cadherin 5 domain in the interval 1279-1368; sequence RENELMFEIE…ADVNDNKPKI (90 aa). 3 consecutive Cadherin domains span residues 1545-1648, 1676-1756, and 1757-1857; these read DKAA…APRF, AEDL…TPEF, and ELSS…HPMI. 2 N-linked (GlcNAc...) asparagine glycosylation sites follow: asparagine 1895 and asparagine 1900. 3 consecutive Cadherin domains span residues 1954 to 2045, 2046 to 2145, and 2146 to 2245; these read TVSV…SPRF, DQQL…NAPR, and FSRI…APIF. N-linked (GlcNAc...) asparagine glycans are attached at residues asparagine 2053, asparagine 2129, asparagine 2203, asparagine 2382, asparagine 2391, asparagine 2410, asparagine 2414, asparagine 2431, asparagine 2527, asparagine 2530, asparagine 2564, asparagine 2621, asparagine 2665, asparagine 2712, asparagine 2798, asparagine 2809, asparagine 2927, asparagine 2976, and asparagine 3045. The Laminin G-like domain occupies 3040 to 3205; the sequence is EISVRNGTSH…SSTGTSRNEC (166 aa). A disulfide bridge connects residues cysteine 3172 and cysteine 3205. N-linked (GlcNAc...) asparagine glycans are attached at residues asparagine 3222 and asparagine 3225. Residues 3229-3250 form a helical membrane-spanning segment; it reads LILLITLALISLIGFSVCLLAI. At 3251–3343 the chain is on the cytoplasmic side; sequence RRRWRQKSPG…RDGHINMAYL (93 aa). The tract at residues 3257 to 3277 is disordered; it reads KSPGDQKQTERSNGWTGHVMP.

In terms of tissue distribution, expressed in the anchor cell.

It is found in the cell membrane. The protein resides in the basolateral cell membrane. It localises to the cell junction. In terms of biological role, cell adhesion protein involved in the control of epithelial morphogenesis. Together with metalloproteinase zmp-1 and hemicentin him-4, plays a role in anchor cell (AC) invasion during postembryonic vulval development. This is Cadherin-3 (cdh-3) from Caenorhabditis elegans.